Consider the following 197-residue polypeptide: Imidazoleglycerol-phosphate dehydratase (197 aa).

The protein belongs to the imidazoleglycerol-phosphate dehydratase family.

The protein localises to the cytoplasm. The catalysed reaction is D-erythro-1-(imidazol-4-yl)glycerol 3-phosphate = 3-(imidazol-4-yl)-2-oxopropyl phosphate + H2O. It functions in the pathway amino-acid biosynthesis; L-histidine biosynthesis; L-histidine from 5-phospho-alpha-D-ribose 1-diphosphate: step 6/9. The protein is Imidazoleglycerol-phosphate dehydratase of Novosphingobium aromaticivorans (strain ATCC 700278 / DSM 12444 / CCUG 56034 / CIP 105152 / NBRC 16084 / F199).